The chain runs to 539 residues: GMP synthase [glutamine-hydrolyzing] (539 aa).

Residues 4 to 202 form the Glutamine amidotransferase type-1 domain; it reads KVLILDFGSQ…VLEIAGAKPD (199 aa). The active-site Nucleophile is Cys81. Active-site residues include His176 and Glu178. The region spanning 203 to 395 is the GMPS ATP-PPase domain; sequence WVMRDHIDEA…LGLPHEMVYR (193 aa). ATP is bound at residue 230–236; that stretch reads SGGVDSS.

As to quaternary structure, homodimer.

The catalysed reaction is XMP + L-glutamine + ATP + H2O = GMP + L-glutamate + AMP + diphosphate + 2 H(+). It participates in purine metabolism; GMP biosynthesis; GMP from XMP (L-Gln route): step 1/1. Its function is as follows. Catalyzes the synthesis of GMP from XMP. The sequence is that of GMP synthase [glutamine-hydrolyzing] from Ralstonia pickettii (strain 12J).